We begin with the raw amino-acid sequence, 508 residues long: Photosystem II CP47 reaction center protein (508 aa).

The next 6 helical transmembrane spans lie at 21-36 (AVHLMHTALVSGWAGS), 101-115 (IVLSGLLFLAAIWHW), 140-156 (GIHLFLSGVLCFGFGAF), 203-218 (IAAGILGILAGLFHLS), 237-252 (VLSSSIAAVFFAAFVV), and 457-472 (CFALLFFFGHLWHGSR).

Belongs to the PsbB/PsbC family. PsbB subfamily. As to quaternary structure, PSII is composed of 1 copy each of membrane proteins PsbA, PsbB, PsbC, PsbD, PsbE, PsbF, PsbH, PsbI, PsbJ, PsbK, PsbL, PsbM, PsbT, PsbX, PsbY, PsbZ, Psb30/Ycf12, at least 3 peripheral proteins of the oxygen-evolving complex and a large number of cofactors. It forms dimeric complexes. Binds multiple chlorophylls. PSII binds additional chlorophylls, carotenoids and specific lipids. serves as cofactor.

Its subcellular location is the plastid. The protein localises to the chloroplast thylakoid membrane. Its function is as follows. One of the components of the core complex of photosystem II (PSII). It binds chlorophyll and helps catalyze the primary light-induced photochemical processes of PSII. PSII is a light-driven water:plastoquinone oxidoreductase, using light energy to abstract electrons from H(2)O, generating O(2) and a proton gradient subsequently used for ATP formation. This Zygnema circumcarinatum (Green alga) protein is Photosystem II CP47 reaction center protein.